The chain runs to 86 residues: Stage V sporulation protein S (86 aa).

Interferes with sporulation at an early stage. Seems to play a positive role in allowing cells to progress beyond stage V of sporulation. This chain is Stage V sporulation protein S, found in Bacillus subtilis (strain 168).